A 219-amino-acid chain; its full sequence is Cytidylate kinase (219 aa).

15-23 (GPAASGKGT) provides a ligand contact to ATP.

It belongs to the cytidylate kinase family. Type 1 subfamily.

The protein resides in the cytoplasm. The enzyme catalyses CMP + ATP = CDP + ADP. It catalyses the reaction dCMP + ATP = dCDP + ADP. In Brucella melitensis biotype 1 (strain ATCC 23456 / CCUG 17765 / NCTC 10094 / 16M), this protein is Cytidylate kinase.